The sequence spans 876 residues: Alanine--tRNA ligase (876 aa).

Position 74 is an N6-acetyllysine (lysine 74). The Zn(2+) site is built by histidine 564, histidine 568, cysteine 666, and histidine 670.

Belongs to the class-II aminoacyl-tRNA synthetase family. Homotetramer. Zn(2+) is required as a cofactor.

The protein localises to the cytoplasm. The catalysed reaction is tRNA(Ala) + L-alanine + ATP = L-alanyl-tRNA(Ala) + AMP + diphosphate. Its function is as follows. Catalyzes the attachment of alanine to tRNA(Ala) in a two-step reaction: alanine is first activated by ATP to form Ala-AMP and then transferred to the acceptor end of tRNA(Ala). Also edits incorrectly charged Ser-tRNA(Ala) and Gly-tRNA(Ala) via its editing domain. This chain is Alanine--tRNA ligase, found in Escherichia coli O6:K15:H31 (strain 536 / UPEC).